Here is a 171-residue protein sequence, read N- to C-terminus: Peptide deformylase (171 aa).

Positions 94 and 136 each coordinate Fe cation. The active site involves glutamate 137. Fe cation is bound at residue histidine 140.

This sequence belongs to the polypeptide deformylase family. It depends on Fe(2+) as a cofactor.

It catalyses the reaction N-terminal N-formyl-L-methionyl-[peptide] + H2O = N-terminal L-methionyl-[peptide] + formate. Its function is as follows. Removes the formyl group from the N-terminal Met of newly synthesized proteins. Requires at least a dipeptide for an efficient rate of reaction. N-terminal L-methionine is a prerequisite for activity but the enzyme has broad specificity at other positions. In Afipia carboxidovorans (strain ATCC 49405 / DSM 1227 / KCTC 32145 / OM5) (Oligotropha carboxidovorans), this protein is Peptide deformylase.